Consider the following 592-residue polypeptide: Potassium-transporting ATPase potassium-binding subunit (592 aa).

Transmembrane regions (helical) follow at residues 6-26 (WLETILFFVVLLALIKPFGTY), 67-87 (ACAMLLFNLVFAVSLFAMLLL), 136-156 (GFAVHNFTSAATGIVIAIAAI), 179-199 (LYILLPLSLIAAIFLVSQGVI), 283-303 (LSNIFEVFLILLISGGLTYTF), 312-332 (QGWALLAVMLAILILAIGVFY), 359-379 (FGLAGSALFATATTGTSCGAV), 389-409 (IGGMVPLSLILLSEVIFGGVG), 411-431 (GLYTMLAFVVIAVFVAGLMIG), 450-470 (ITTVLASGILVLIFSGIAMIL), 489-511 (LYAFASMSNNNGSAFAGLNGNTL), 519-539 (VAMLLGRFVPAVAVLAMAGGL), and 559-579 (FALWLTLVILIVGALTFFPAL).

The protein belongs to the KdpA family. The system is composed of three essential subunits: KdpA, KdpB and KdpC.

It is found in the cell inner membrane. Functionally, part of the high-affinity ATP-driven potassium transport (or Kdp) system, which catalyzes the hydrolysis of ATP coupled with the electrogenic transport of potassium into the cytoplasm. This subunit binds the periplasmic potassium ions and delivers the ions to the membrane domain of KdpB through an intramembrane tunnel. This is Potassium-transporting ATPase potassium-binding subunit from Geotalea uraniireducens (strain Rf4) (Geobacter uraniireducens).